Reading from the N-terminus, the 365-residue chain is 2-aminoethylphosphonate--pyruvate transaminase (365 aa).

Position 194 is an N6-(pyridoxal phosphate)lysine (Lys-194).

The protein belongs to the class-V pyridoxal-phosphate-dependent aminotransferase family. PhnW subfamily. Homodimer. Pyridoxal 5'-phosphate serves as cofactor.

It catalyses the reaction (2-aminoethyl)phosphonate + pyruvate = phosphonoacetaldehyde + L-alanine. Involved in phosphonate degradation. In Bacillus cereus (strain ATCC 10987 / NRS 248), this protein is 2-aminoethylphosphonate--pyruvate transaminase.